Consider the following 459-residue polypeptide: Sorting nexin-8 (459 aa).

A disordered region spans residues 1-37 (MTGRAMDPLPSPAVAAAAEAEADEEADPPATGPRTSQ). In terms of domain architecture, PX spans 68–176 (AKDTVQVELI…KLFLSFSGSD (109 aa)). Arg104, Lys130, and Arg143 together coordinate a 1,2-diacyl-sn-glycero-3-phospho-(1D-myo-inositol-3-phosphate). At Thr446 the chain carries Phosphothreonine. Ser450 bears the Phosphoserine mark.

The protein belongs to the sorting nexin family.

It is found in the early endosome membrane. In terms of biological role, may be involved in several stages of intracellular trafficking. May play a role in intracellular protein transport from early endosomes to the trans-Golgi network. This chain is Sorting nexin-8 (Snx8), found in Mus musculus (Mouse).